Reading from the N-terminus, the 361-residue chain is Beta-hexosaminidase (361 aa).

Substrate is bound by residues D69, R77, R144, and 174 to 175; that span reads KH. H187 acts as the Proton donor/acceptor in catalysis. The active-site Nucleophile is the D258.

This sequence belongs to the glycosyl hydrolase 3 family. NagZ subfamily.

Its subcellular location is the cytoplasm. It catalyses the reaction Hydrolysis of terminal non-reducing N-acetyl-D-hexosamine residues in N-acetyl-beta-D-hexosaminides.. It participates in cell wall biogenesis; peptidoglycan recycling. In terms of biological role, plays a role in peptidoglycan recycling by cleaving the terminal beta-1,4-linked N-acetylglucosamine (GlcNAc) from peptide-linked peptidoglycan fragments, giving rise to free GlcNAc, anhydro-N-acetylmuramic acid and anhydro-N-acetylmuramic acid-linked peptides. This is Beta-hexosaminidase from Neisseria meningitidis serogroup C / serotype 2a (strain ATCC 700532 / DSM 15464 / FAM18).